A 136-amino-acid chain; its full sequence is Large ribosomal subunit protein bL17 (136 aa).

This sequence belongs to the bacterial ribosomal protein bL17 family. Part of the 50S ribosomal subunit. Contacts protein L32.

The protein is Large ribosomal subunit protein bL17 of Rickettsia prowazekii (strain Madrid E).